A 112-amino-acid chain; its full sequence is Tyrosine-protein phosphatase 17 (112 aa).

One can recognise a Tyrosine-protein phosphatase domain in the interval 1-112 (WRMIWEHECC…QPHTAGPIVV (112 aa)). Substrate is bound at residue Asp-82.

This sequence belongs to the protein-tyrosine phosphatase family.

It carries out the reaction O-phospho-L-tyrosyl-[protein] + H2O = L-tyrosyl-[protein] + phosphate. The chain is Tyrosine-protein phosphatase 17 (STY-17) from Styela plicata (Wrinkled sea squirt).